A 557-amino-acid chain; its full sequence is Selenoprotein N (557 aa).

A compositionally biased stretch (basic and acidic residues) spans 1-21; it reads MAADVDKTPAGEQKDDHEDRG. The interval 1-28 is disordered; it reads MAADVDKTPAGEQKDDHEDRGTPSSRRG. The chain crosses the membrane as a helical span at residues 35–55; that stretch reads ISSLFIIAAIPVIGVCIKYYL. Selenocysteine 430 is a non-standard amino acid (selenocysteine). 2 N-linked (GlcNAc...) asparagine glycosylation sites follow: asparagine 451 and asparagine 499.

In terms of assembly, interacts with ryr3.

It localises to the endoplasmic reticulum membrane. Functionally, plays an important role in cell protection against oxidative stress and in the regulation of redox-related calcium homeostasis. Regulates the calcium level of the ER by protecting the calcium pump ATP2A2 against the oxidoreductase ERO1A-mediated oxidative damage. Acts as a modulator of ryanodine receptor (RyR) activity: protects RyR from oxidation due to increased oxidative stress, or directly controls the RyR redox state, regulating the RyR-mediated calcium mobilization required for normal muscle development and differentiation. Plays an important role in muscle development and differentiation during early development. Required for development of the slow muscle fiber lineage. Required for the correct organization and attachment of the myofibrils, as well as for the continuity and integrity of the connective tissue that forms the myoseptum. In Danio rerio (Zebrafish), this protein is Selenoprotein N.